Reading from the N-terminus, the 52-residue chain is Ribosome modulation factor (52 aa).

Belongs to the ribosome modulation factor family.

The protein resides in the cytoplasm. In terms of biological role, during stationary phase, converts 70S ribosomes to an inactive dimeric form (100S ribosomes). The sequence is that of Ribosome modulation factor from Xenorhabdus nematophila (strain ATCC 19061 / DSM 3370 / CCUG 14189 / LMG 1036 / NCIMB 9965 / AN6).